Consider the following 675-residue polypeptide: Alpha-1,4-glucan:maltose-1-phosphate maltosyltransferase (675 aa).

Residues lysine 256, glutamine 316, and aspartate 351 each coordinate alpha-maltose 1-phosphate. The active-site Nucleophile is the aspartate 386. Asparagine 387 contacts alpha-maltose 1-phosphate. The active-site Proton donor is the glutamate 415. 525–526 contributes to the alpha-maltose 1-phosphate binding site; sequence KY.

Belongs to the glycosyl hydrolase 13 family. GlgE subfamily. Homodimer.

It carries out the reaction alpha-maltose 1-phosphate + [(1-&gt;4)-alpha-D-glucosyl](n) = [(1-&gt;4)-alpha-D-glucosyl](n+2) + phosphate. In terms of biological role, maltosyltransferase that uses maltose 1-phosphate (M1P) as the sugar donor to elongate linear or branched alpha-(1-&gt;4)-glucans. Is involved in a branched alpha-glucan biosynthetic pathway from trehalose, together with TreS, Mak and GlgB. This chain is Alpha-1,4-glucan:maltose-1-phosphate maltosyltransferase, found in Corynebacterium glutamicum (strain ATCC 13032 / DSM 20300 / JCM 1318 / BCRC 11384 / CCUG 27702 / LMG 3730 / NBRC 12168 / NCIMB 10025 / NRRL B-2784 / 534).